We begin with the raw amino-acid sequence, 205 residues long: Guanylate kinase (205 aa).

In terms of domain architecture, Guanylate kinase-like spans 6-184 (GLLIVLSGPA…AVERIKAIVT (179 aa)). 13–20 (GPAGVGKG) contributes to the ATP binding site.

Belongs to the guanylate kinase family.

The protein resides in the cytoplasm. The catalysed reaction is GMP + ATP = GDP + ADP. Functionally, essential for recycling GMP and indirectly, cGMP. This is Guanylate kinase from Shouchella clausii (strain KSM-K16) (Alkalihalobacillus clausii).